A 378-amino-acid polypeptide reads, in one-letter code: Queuine tRNA-ribosyltransferase (378 aa).

D91 serves as the catalytic Proton acceptor. Residues 91–95, D145, Q189, and G216 each bind substrate; that span reads DSGGF. The interval 247–253 is RNA binding; sequence GVGKPED. D266 serves as the catalytic Nucleophile. The segment at 271 to 275 is RNA binding; important for wobble base 34 recognition; that stretch reads TRNAR. Zn(2+)-binding residues include C304, C306, C309, and H335.

Belongs to the queuine tRNA-ribosyltransferase family. In terms of assembly, homodimer. Within each dimer, one monomer is responsible for RNA recognition and catalysis, while the other monomer binds to the replacement base PreQ1. It depends on Zn(2+) as a cofactor.

It catalyses the reaction 7-aminomethyl-7-carbaguanine + guanosine(34) in tRNA = 7-aminomethyl-7-carbaguanosine(34) in tRNA + guanine. It functions in the pathway tRNA modification; tRNA-queuosine biosynthesis. Functionally, catalyzes the base-exchange of a guanine (G) residue with the queuine precursor 7-aminomethyl-7-deazaguanine (PreQ1) at position 34 (anticodon wobble position) in tRNAs with GU(N) anticodons (tRNA-Asp, -Asn, -His and -Tyr). Catalysis occurs through a double-displacement mechanism. The nucleophile active site attacks the C1' of nucleotide 34 to detach the guanine base from the RNA, forming a covalent enzyme-RNA intermediate. The proton acceptor active site deprotonates the incoming PreQ1, allowing a nucleophilic attack on the C1' of the ribose to form the product. After dissociation, two additional enzymatic reactions on the tRNA convert PreQ1 to queuine (Q), resulting in the hypermodified nucleoside queuosine (7-(((4,5-cis-dihydroxy-2-cyclopenten-1-yl)amino)methyl)-7-deazaguanosine). This chain is Queuine tRNA-ribosyltransferase, found in Vibrio campbellii (strain ATCC BAA-1116).